The sequence spans 240 residues: 1-(5-phosphoribosyl)-5-[(5-phosphoribosylamino)methylideneamino] imidazole-4-carboxamide isomerase (240 aa).

Residue D8 is the Proton acceptor of the active site. The active-site Proton donor is the D129.

It belongs to the HisA/HisF family.

It is found in the cytoplasm. The enzyme catalyses 1-(5-phospho-beta-D-ribosyl)-5-[(5-phospho-beta-D-ribosylamino)methylideneamino]imidazole-4-carboxamide = 5-[(5-phospho-1-deoxy-D-ribulos-1-ylimino)methylamino]-1-(5-phospho-beta-D-ribosyl)imidazole-4-carboxamide. The protein operates within amino-acid biosynthesis; L-histidine biosynthesis; L-histidine from 5-phospho-alpha-D-ribose 1-diphosphate: step 4/9. This Listeria monocytogenes serotype 4b (strain F2365) protein is 1-(5-phosphoribosyl)-5-[(5-phosphoribosylamino)methylideneamino] imidazole-4-carboxamide isomerase.